The primary structure comprises 212 residues: Translation initiation factor IF-3 (212 aa).

Belongs to the IF-3 family. As to quaternary structure, monomer.

Its subcellular location is the cytoplasm. IF-3 binds to the 30S ribosomal subunit and shifts the equilibrium between 70S ribosomes and their 50S and 30S subunits in favor of the free subunits, thus enhancing the availability of 30S subunits on which protein synthesis initiation begins. The polypeptide is Translation initiation factor IF-3 (Synechococcus sp. (strain CC9311)).